The following is a 528-amino-acid chain: Calcium-dependent protein kinase 17 (528 aa).

The segment at 1 to 65 (MGNCCSHGRD…GPIGPVLGRP (65 aa)) is disordered. G2 is lipidated: N-myristoyl glycine. Low complexity predominate over residues 20-45 (NGASASNAANSTGPTAEASVPQSKHA). In terms of domain architecture, Protein kinase spans 73–331 (YSLGKELGRG…AAQVLNHPWI (259 aa)). Residues 79–87 (LGRGQFGVT) and K102 each bind ATP. The Proton acceptor role is filled by D197. S237 is subject to Phosphoserine. The interval 337 to 367 (APDVPLDNAVMSRLKQFKAMNNFKKVALRVI) is autoinhibitory domain. EF-hand domains lie at 374–409 (EEIMGLKEMFKGMDTDSSGTITLEELRQGLAKQGTR), 410–445 (LSEYEVQQLMEAADADGNGTIDYGEFIAATMHINRL), 446–481 (DREEHLYSAFQHFDKDNSGYITMEELEQALREFGMN), and 485–516 (DIKEIISEVDGDNDGRINYDEFVAMMRKGNPD). Positions 387, 389, 391, 393, 398, 423, 425, 427, 429, 434, 459, 461, 463, 465, 470, 494, 496, 498, 500, and 505 each coordinate Ca(2+).

This sequence belongs to the protein kinase superfamily. Ser/Thr protein kinase family. CDPK subfamily.

The protein resides in the membrane. It catalyses the reaction L-seryl-[protein] + ATP = O-phospho-L-seryl-[protein] + ADP + H(+). The catalysed reaction is L-threonyl-[protein] + ATP = O-phospho-L-threonyl-[protein] + ADP + H(+). Its activity is regulated as follows. Activated by calcium. Autophosphorylation may play an important role in the regulation of the kinase activity. Its function is as follows. May play a role in signal transduction pathways that involve calcium as a second messenger. This is Calcium-dependent protein kinase 17 (CPK17) from Arabidopsis thaliana (Mouse-ear cress).